A 59-amino-acid polypeptide reads, in one-letter code: Large ribosomal subunit protein bL32 (59 aa).

The segment at 1–59 (MAVQQNKKSPSKRGMHRSHDHLSAAPLAVEPTTGETHLRHHVSPNGYYRGRKVIKTKND) is disordered. Basic residues-rich tracts occupy residues 9–19 (SPSKRGMHRSH) and 49–59 (RGRKVIKTKND).

The protein belongs to the bacterial ribosomal protein bL32 family.

The chain is Large ribosomal subunit protein bL32 from Cupriavidus necator (strain ATCC 17699 / DSM 428 / KCTC 22496 / NCIMB 10442 / H16 / Stanier 337) (Ralstonia eutropha).